A 292-amino-acid polypeptide reads, in one-letter code: AKT-interacting protein (292 aa).

The interval 1–64 is disordered; sequence MNPFWNMSSA…ISPSPSVQPT (64 aa). Residues 14-23 are compositionally biased toward basic and acidic residues; it reads KRSDNDEKIA. The UBC core domain occupies 75-223; sequence YLEYSLLAEF…VVDSVKLCNS (149 aa). The tract at residues 273–292 is disordered; sequence SWVKPGSVLPFSKEENSLQT.

The protein belongs to the ubiquitin-conjugating enzyme family. FTS subfamily.

The protein localises to the cytoplasm. Its subcellular location is the cell membrane. Its function is as follows. May function to promote vesicle trafficking and/or fusion. May also regulate apoptosis. The chain is AKT-interacting protein (aktip) from Xenopus tropicalis (Western clawed frog).